The primary structure comprises 248 residues: mRNA-decapping protein OPG122 (248 aa).

A Nudix hydrolase domain is found at 45 to 227; sequence HKRVSVSAIL…IAKYALDTAK (183 aa). Positions 126–147 match the Nudix box motif; it reads GIPKRGENVPECLSREIKEEVN. E132 is a binding site for Mg(2+). E141 functions as the Nucleophile in the catalytic mechanism. Position 145 (E145) interacts with Mn(2+). Position 167 (D167) interacts with Mg(2+).

It belongs to the Nudix hydrolase family. The cofactor is Mg(2+). Mn(2+) serves as cofactor.

It is found in the host mitochondrion. Functionally, decapping enzyme that remove the protective 5'-cap from both host and viral mRNAs to commit transcripts for decay by the cellular exonuclease XRN1. Preferentially targets spliced mRNAs and since all viral genes are intronless, it preferentially targets host over viral transcripts. Acceleration of the turnover of cellular transcripts promotes the shutoff of host protein synthesis and therefore diminish the magnitude of antiviral response. In Vaccinia virus (strain Copenhagen) (VACV), this protein is mRNA-decapping protein OPG122 (OPG122).